The chain runs to 366 residues: Peptide chain release factor 2 (366 aa).

Gln-249 bears the N5-methylglutamine mark.

Belongs to the prokaryotic/mitochondrial release factor family. Post-translationally, methylated by PrmC. Methylation increases the termination efficiency of RF2.

The protein localises to the cytoplasm. In terms of biological role, peptide chain release factor 2 directs the termination of translation in response to the peptide chain termination codons UGA and UAA. The protein is Peptide chain release factor 2 of Petrotoga mobilis (strain DSM 10674 / SJ95).